We begin with the raw amino-acid sequence, 245 residues long: Ribonuclease PH (245 aa).

Phosphate contacts are provided by residues R86 and 124 to 126; that span reads GTR.

This sequence belongs to the RNase PH family. As to quaternary structure, homohexameric ring arranged as a trimer of dimers.

It carries out the reaction tRNA(n+1) + phosphate = tRNA(n) + a ribonucleoside 5'-diphosphate. Functionally, phosphorolytic 3'-5' exoribonuclease that plays an important role in tRNA 3'-end maturation. Removes nucleotide residues following the 3'-CCA terminus of tRNAs; can also add nucleotides to the ends of RNA molecules by using nucleoside diphosphates as substrates, but this may not be physiologically important. Probably plays a role in initiation of 16S rRNA degradation (leading to ribosome degradation) during starvation. In Bacillus velezensis (strain DSM 23117 / BGSC 10A6 / LMG 26770 / FZB42) (Bacillus amyloliquefaciens subsp. plantarum), this protein is Ribonuclease PH.